A 357-amino-acid polypeptide reads, in one-letter code: Olfactory receptor 2B2 (357 aa).

Residues 1–25 (MNWVNKSVPQEFILLVFSDQPWLEI) are Extracellular-facing. N5 is a glycosylation site (N-linked (GlcNAc...) asparagine). Residues 26 to 49 (PPFVMFLFSYILTIFGNLTIILVS) traverse the membrane as a helical segment. The Cytoplasmic segment spans residues 50–57 (HVDFKLHT). The helical transmembrane segment at 58-79 (PMYFFLSNLSLLDLCYTTSTVP) threads the bilayer. The Extracellular segment spans residues 80 to 100 (QMLVNICNTRKVISYGGCVAQ). Cysteines 97 and 189 form a disulfide. Residues 101–120 (LFIFLALGSTECLLLAVMCF) form a helical membrane-spanning segment. Residues 121–139 (DRFVAICRPLHYSIIMHQR) lie on the Cytoplasmic side of the membrane. A helical transmembrane segment spans residues 140 to 158 (LCFQLAAASWISGFSNSVL). Topologically, residues 159 to 195 (QSTWTLKMPLCGHKEVDHFFCEVPALLKLSCVDTTAN) are extracellular. A helical transmembrane segment spans residues 196–219 (EAELFFISVLFLLIPVTLILISYA). Residues 220–236 (FIVQAVLRIQSAEGQRK) lie on the Cytoplasmic side of the membrane. The helical transmembrane segment at 237-259 (AFGTCGSHLIVVSLFYGTAISMY) threads the bilayer. Residues 260–272 (LQPPSPSSKDRGK) lie on the Extracellular side of the membrane. Residues 273–292 (MVSLFCGIIAPMLNPLIYTL) traverse the membrane as a helical segment. Residues 293–357 (RNKEVKEAFK…YCNLPQRKFP (65 aa)) are Cytoplasmic-facing.

This sequence belongs to the G-protein coupled receptor 1 family.

Its subcellular location is the cell membrane. In terms of biological role, odorant receptor. This Homo sapiens (Human) protein is Olfactory receptor 2B2 (OR2B2).